A 318-amino-acid chain; its full sequence is UAP56-interacting factor (318 aa).

Methionine 1 is subject to N-acetylmethionine. A disordered region spans residues 1–27; the sequence is MNRFSTRLMGATATPPPAPPKARSNEN. The residue at position 14 (threonine 14) is a Phosphothreonine. Serine 24 is modified (phosphoserine). A UAP56-binding motif motif is present at residues 27-45; it reads NLDKIDMSLDDIIKLNRKE. A phosphoserine mark is found at serine 61 and serine 118. Residue lysine 140 forms a Glycyl lysine isopeptide (Lys-Gly) (interchain with G-Cter in SUMO1) linkage. Residues 163-180 show a composition bias toward polar residues; sequence LNRKNNIPNNFTRSGNKL. The disordered stretch occupies residues 163 to 183; it reads LNRKNNIPNNFTRSGNKLSHQ. Lysine 261 participates in a covalent cross-link: Glycyl lysine isopeptide (Lys-Gly) (interchain with G-Cter in SUMO2).

This sequence belongs to the UIF family. Interacts with DDX39B/UAP56 and NXF1; interaction with DDX39B/UAP56 and NXF1 are mutually exclusive. Interacts with SSRP1; required for its recruitment to mRNAs. Interacts with CHTOP.

Its subcellular location is the nucleus. The protein localises to the nucleoplasm. It is found in the nucleus speckle. Functionally, required for mRNA export from the nucleus to the cytoplasm. Acts as an adapter that uses the DDX39B/UAP56-NFX1 pathway to ensure efficient mRNA export and delivering to the nuclear pore. Associates with spliced and unspliced mRNAs simultaneously with ALYREF/THOC4. The polypeptide is UAP56-interacting factor (FYTTD1) (Bos taurus (Bovine)).